Reading from the N-terminus, the 144-residue chain is Maximins 2/H8 type 1 (144 aa).

The first 18 residues, Met1–Ala18, serve as a signal peptide directing secretion. The propeptide occupies Arg19–Arg43. Asn70 is subject to Asparagine amide. Residues Thr74–Arg123 constitute a propeptide that is removed on maturation. An Isoleucine amide modification is found at Ile143.

This sequence belongs to the bombinin family. Expressed by the skin glands.

The protein resides in the secreted. Functionally, maximin-2 shows antibacterial activity against both Gram-positive and Gram-negative bacteria. It also shows antimicrobial activity against the fungus C.albicans, but not against A.flavus nor P.uticale. It has little hemolytic activity. Maximin-H8 shows antimicrobial activity against bacteria and against the fungus C.albicans. Shows strong hemolytic activity. This Bombina maxima (Giant fire-bellied toad) protein is Maximins 2/H8 type 1.